Reading from the N-terminus, the 254-residue chain is Phosphoribosylaminoimidazole-succinocarboxamide synthase (254 aa).

The protein belongs to the SAICAR synthetase family.

The catalysed reaction is 5-amino-1-(5-phospho-D-ribosyl)imidazole-4-carboxylate + L-aspartate + ATP = (2S)-2-[5-amino-1-(5-phospho-beta-D-ribosyl)imidazole-4-carboxamido]succinate + ADP + phosphate + 2 H(+). It participates in purine metabolism; IMP biosynthesis via de novo pathway; 5-amino-1-(5-phospho-D-ribosyl)imidazole-4-carboxamide from 5-amino-1-(5-phospho-D-ribosyl)imidazole-4-carboxylate: step 1/2. The sequence is that of Phosphoribosylaminoimidazole-succinocarboxamide synthase from Bartonella tribocorum (strain CIP 105476 / IBS 506).